The primary structure comprises 207 residues: Octanoyltransferase (207 aa).

Residues 29 to 204 (DDTADELWLV…ELMVQLGDEE (176 aa)) form the BPL/LPL catalytic domain. Residues 68–75 (RGGQVTYH), 135–137 (SLG), and 148–150 (GVA) each bind substrate. The active-site Acyl-thioester intermediate is the Cys166.

Belongs to the LipB family.

The protein localises to the cytoplasm. It catalyses the reaction octanoyl-[ACP] + L-lysyl-[protein] = N(6)-octanoyl-L-lysyl-[protein] + holo-[ACP] + H(+). It participates in protein modification; protein lipoylation via endogenous pathway; protein N(6)-(lipoyl)lysine from octanoyl-[acyl-carrier-protein]: step 1/2. Functionally, catalyzes the transfer of endogenously produced octanoic acid from octanoyl-acyl-carrier-protein onto the lipoyl domains of lipoate-dependent enzymes. Lipoyl-ACP can also act as a substrate although octanoyl-ACP is likely to be the physiological substrate. The sequence is that of Octanoyltransferase from Methylococcus capsulatus (strain ATCC 33009 / NCIMB 11132 / Bath).